The sequence spans 369 residues: Ubiquinone biosynthesis protein COQ4, mitochondrial (369 aa).

The N-terminal 35 residues, 1-35 (MLTSQKVSRVLLHSSFLKTPVSTQSRSFVFTTIAT), are a transit peptide targeting the mitochondrion. The Zn(2+) site is built by His212, Asp213, His216, and Glu228. Residues 329–360 (AAAAATVTQRQRQQQRATATAANATSASSANV) are compositionally biased toward low complexity. The segment at 329–369 (AAAAATVTQRQRQQQRATATAANATSASSANVKPSNTAGAM) is disordered.

The protein belongs to the COQ4 family. As to quaternary structure, component of a multi-subunit COQ enzyme complex, composed of at least COQ3, COQ4, COQ5, COQ6, COQ7 and COQ9. Requires Zn(2+) as cofactor.

It is found in the mitochondrion inner membrane. The enzyme catalyses a 4-hydroxy-3-methoxy-5-(all-trans-polyprenyl)benzoate + H(+) = a 2-methoxy-6-(all-trans-polyprenyl)phenol + CO2. Its pathway is cofactor biosynthesis; ubiquinone biosynthesis. In terms of biological role, lyase that catalyzes the C1-decarboxylation of 4-hydroxy-3-methoxy-5-(all-trans-polyprenyl)benzoic acid into 2-methoxy-6-(all-trans-polyprenyl)phenol during ubiquinone biosynthesis. This chain is Ubiquinone biosynthesis protein COQ4, mitochondrial, found in Lodderomyces elongisporus (strain ATCC 11503 / CBS 2605 / JCM 1781 / NBRC 1676 / NRRL YB-4239) (Yeast).